Consider the following 417-residue polypeptide: MAP kinase-interacting serine/threonine-protein kinase 1 (417 aa).

The interval 1–20 (MVSSQPVPIDDGGKRRKKKR) is disordered. The Protein kinase domain occupies 37–321 (RLTDELLGEG…AAQVLQHPWL (285 aa)). ATP-binding positions include 43–51 (LGEGAYAKV) and K66. The Proton acceptor role is filled by D158. The tract at residues 397–417 (AHARKGGSHLTHTTVTSQGAT) is disordered. The span at 406–417 (LTHTTVTSQGAT) shows a compositional bias: polar residues.

This sequence belongs to the protein kinase superfamily. CAMK Ser/Thr protein kinase family. It depends on Mg(2+) as a cofactor.

It carries out the reaction L-seryl-[protein] + ATP = O-phospho-L-seryl-[protein] + ADP + H(+). The enzyme catalyses L-threonyl-[protein] + ATP = O-phospho-L-threonyl-[protein] + ADP + H(+). Functionally, may play a role in the response to environmental stress and cytokines. Appears to regulate translation by phosphorylating EIF4E, thus increasing the affinity of this protein for the 7-methylguanosine-containing mRNA cap. This Xenopus tropicalis (Western clawed frog) protein is MAP kinase-interacting serine/threonine-protein kinase 1 (mknk1).